Here is a 117-residue protein sequence, read N- to C-terminus: NADH-ubiquinone oxidoreductase chain 3 (117 aa).

Helical transmembrane passes span 4-24 (IIFI…LASI), 60-80 (ITII…MIII), and 86-106 (IMIW…GLYH).

It belongs to the complex I subunit 3 family.

Its subcellular location is the mitochondrion membrane. The catalysed reaction is a ubiquinone + NADH + 5 H(+)(in) = a ubiquinol + NAD(+) + 4 H(+)(out). Core subunit of the mitochondrial membrane respiratory chain NADH dehydrogenase (Complex I) that is believed to belong to the minimal assembly required for catalysis. Complex I functions in the transfer of electrons from NADH to the respiratory chain. The immediate electron acceptor for the enzyme is believed to be ubiquinone. The polypeptide is NADH-ubiquinone oxidoreductase chain 3 (mt:ND3) (Drosophila melanogaster (Fruit fly)).